Reading from the N-terminus, the 253-residue chain is Pimeloyl-[acyl-carrier protein] methyl ester esterase (253 aa).

Substrate-binding positions include Trp18, 78 to 79, and 139 to 143; these read SL and FLALD. Ser78 serves as the catalytic Nucleophile. Residues Asp203 and His231 contribute to the active site. Substrate is bound at residue His231.

This sequence belongs to the AB hydrolase superfamily. Carboxylesterase BioH family. As to quaternary structure, monomer.

The protein resides in the cytoplasm. It catalyses the reaction 6-carboxyhexanoyl-[ACP] methyl ester + H2O = 6-carboxyhexanoyl-[ACP] + methanol + H(+). The protein operates within cofactor biosynthesis; biotin biosynthesis. The physiological role of BioH is to remove the methyl group introduced by BioC when the pimeloyl moiety is complete. It allows to synthesize pimeloyl-ACP via the fatty acid synthetic pathway through the hydrolysis of the ester bonds of pimeloyl-ACP esters. This Xanthomonas axonopodis pv. citri (strain 306) protein is Pimeloyl-[acyl-carrier protein] methyl ester esterase.